The chain runs to 66 residues: Conotoxin PnMLCL-01 (66 aa).

The N-terminal stretch at 1–19 (MLCLPVFIILLLLASPAAS) is a signal peptide. The propeptide occupies 20-45 (NPLEKRIQSDLIRAALEDADTKNDPR). Residue Cys-63 is modified to Cysteine amide.

Belongs to the conotoxin T superfamily. Contains 2 disulfide bonds that can be either 'C1-C3, C2-C4' or 'C1-C4, C2-C3', since these disulfide connectivities have been observed for conotoxins with cysteine framework V (for examples, see AC P0DQQ7 and AC P81755). As to expression, expressed by the venom duct.

The protein resides in the secreted. The protein is Conotoxin PnMLCL-01 of Conus pennaceus (Feathered cone).